A 76-amino-acid chain; its full sequence is MARFYRRRKFCRFTAEGVEYIDYKDLDTLKAYITETGKIVPSRITGTKARYQRQLASAIKQARFLALLPYSDSHDN.

This sequence belongs to the bacterial ribosomal protein bS18 family. As to quaternary structure, part of the 30S ribosomal subunit. Forms a tight heterodimer with protein bS6.

Binds as a heterodimer with protein bS6 to the central domain of the 16S rRNA, where it helps stabilize the platform of the 30S subunit. This chain is Small ribosomal subunit protein bS18, found in Alcanivorax borkumensis (strain ATCC 700651 / DSM 11573 / NCIMB 13689 / SK2).